Here is a 386-residue protein sequence, read N- to C-terminus: MSAWVLPDHIADVLPSEARHIEELRRQLLDTARGYGYELVMPPLLEHLESLLSGTGEALDLQTFKLVDQLSGRSMGLRADTTPQVARIDAHLLNREGVARLCYCGPVLHTRPDRPHATREPLQFGAEIYGHAGLEADTEVLLLALDCLHASGLSDGVIVDLADARIVRALFAGVPVDAAVLARVHAALVAKDASELHALTRSFPAASRDGLRALVQLYGDASVLDEAAKALKGTPAVSAALAGLKQLAASLGADPARQISFDLADLRGYAYYSGMRFGIYVPGAADALVRGGRYDEVGAVFGRNRPAVGFSLDVRELVGVLPARPLRAAIRAPWSDAAGLREAIAGLRKAGEIVVCVLPGHGSEIDEFHCDRELVEHAGQWQVRAL.

Belongs to the class-II aminoacyl-tRNA synthetase family. HisZ subfamily. In terms of assembly, heteromultimer composed of HisG and HisZ subunits.

It localises to the cytoplasm. It participates in amino-acid biosynthesis; L-histidine biosynthesis; L-histidine from 5-phospho-alpha-D-ribose 1-diphosphate: step 1/9. Functionally, required for the first step of histidine biosynthesis. May allow the feedback regulation of ATP phosphoribosyltransferase activity by histidine. In Variovorax paradoxus (strain S110), this protein is ATP phosphoribosyltransferase regulatory subunit.